We begin with the raw amino-acid sequence, 172 residues long: S-ribosylhomocysteine lyase (172 aa).

Fe cation contacts are provided by histidine 54, histidine 58, and cysteine 128.

It belongs to the LuxS family. In terms of assembly, homodimer. Fe cation is required as a cofactor.

It catalyses the reaction S-(5-deoxy-D-ribos-5-yl)-L-homocysteine = (S)-4,5-dihydroxypentane-2,3-dione + L-homocysteine. Functionally, involved in the synthesis of autoinducer 2 (AI-2) which is secreted by bacteria and is used to communicate both the cell density and the metabolic potential of the environment. The regulation of gene expression in response to changes in cell density is called quorum sensing. Catalyzes the transformation of S-ribosylhomocysteine (RHC) to homocysteine (HC) and 4,5-dihydroxy-2,3-pentadione (DPD). In Aliivibrio salmonicida (strain LFI1238) (Vibrio salmonicida (strain LFI1238)), this protein is S-ribosylhomocysteine lyase.